Consider the following 217-residue polypeptide: Small ribosomal subunit protein uS3 (217 aa).

Residues 40 to 110 (IRDLINKWFN…EVYINIHEVR (71 aa)) form the KH type-2 domain.

This sequence belongs to the universal ribosomal protein uS3 family. As to quaternary structure, part of the 30S ribosomal subunit. Forms a tight complex with proteins S10 and S14.

Its function is as follows. Binds the lower part of the 30S subunit head. Binds mRNA in the 70S ribosome, positioning it for translation. The protein is Small ribosomal subunit protein uS3 of Rickettsia typhi (strain ATCC VR-144 / Wilmington).